The chain runs to 379 residues: MGYARKVGWVTAGLVIGAGACYCIYRLTRGRKQNKEKMAEGGSGDVDDAGDCSGARYNDWSDDDDDSNESKSIVWYPPWARIGTEAGTRARARARARATRARRAVQKRASPNSDDTVLSPQELQKVLCLVEMSEKPYILEAALIALGNNAAYAFNRDIIRDLGGLPIVAKILNTRDPIVKEKALIVLNNLSVNAENQRRLKVYMNQVCDDTVTSRLNSSVQLAGLRLLTNMTVTNEYQHILANSISDFFRLFSAGNEETKLQVLKLLLNLAENPAMTRELLRAQVPSSLGSLFNKKEYKEVILKLLIIFENINDNFKWEENEPAQNHFSEGSLFFFLKEFQVCADKVLGIESRHDFQVRVKVGKFVAKLTERMFPKSQE.

Residues 1–6 (MGYARK) are Mitochondrial intermembrane-facing. Mitochondrion outer membrane (MOM)-targeting sequence regions lie at residues 1–6 (MGYARK) and 26–37 (RLTRGRKQNKEK). The helical; Signal-anchor transmembrane segment at 7–29 (VGWVTAGLVIGAGACYCIYRLTR) threads the bilayer. The Cytoplasmic segment spans residues 30-379 (GRKQNKEKMA…TERMFPKSQE (350 aa)). S61, S67, and S72 each carry phosphoserine. The segment at 89 to 98 (RARARARARA) is nuclear localization signal. The segment covering 95 to 106 (RARATRARRAVQ) has biased composition (basic residues). The segment at 95–116 (RARATRARRAVQKRASPNSDDT) is disordered. Residue S110 is modified to Phosphoserine. ARM repeat units lie at residues 111 to 151 (PNSD…NNAA), 153 to 192 (AFNR…NLSV), and 233 to 272 (VTNE…NLAE).

This sequence belongs to the eutherian X-chromosome-specific Armcx family. Interacts (via ARM domain) with MIRO1, MIRO2 and TRAK2. The interaction with Miro is calcium-dependent. Interacts with Sox10. As to expression, highly expressed in the developing neural tissues, neural crest derivatives and hind limbs. Also widely expressed in the adult nervous tissue, especially in the forebrain, including the cerebral cortex, hippocampus and thalamus.

It is found in the mitochondrion outer membrane. The protein localises to the cytoplasm. Its subcellular location is the nucleus. In terms of biological role, regulates mitochondrial aggregation and transport in axons in living neurons. May link mitochondria to the Trak2-kinesin motor complex via its interaction with Miro and Trak2. Mitochondrial distribution and dynamics is regulated through Armcx3 protein degradation, which is promoted by PCK and negatively regulated by Wnt1. Enhances the Sox10-mediated transactivation of the neuronal acetylcholine receptor subunit alpha-3 and beta-4 subunit gene promoters. The protein is Armadillo repeat-containing X-linked protein 3 (Armcx3) of Mus musculus (Mouse).